The sequence spans 155 residues: SsrA-binding protein (155 aa).

Residues 135–147 are compositionally biased toward basic and acidic residues; it reads TIKRRDQERDIKK. A disordered region spans residues 135–155; that stretch reads TIKRRDQERDIKKQMKHYNAR.

This sequence belongs to the SmpB family.

It is found in the cytoplasm. Required for rescue of stalled ribosomes mediated by trans-translation. Binds to transfer-messenger RNA (tmRNA), required for stable association of tmRNA with ribosomes. tmRNA and SmpB together mimic tRNA shape, replacing the anticodon stem-loop with SmpB. tmRNA is encoded by the ssrA gene; the 2 termini fold to resemble tRNA(Ala) and it encodes a 'tag peptide', a short internal open reading frame. During trans-translation Ala-aminoacylated tmRNA acts like a tRNA, entering the A-site of stalled ribosomes, displacing the stalled mRNA. The ribosome then switches to translate the ORF on the tmRNA; the nascent peptide is terminated with the 'tag peptide' encoded by the tmRNA and targeted for degradation. The ribosome is freed to recommence translation, which seems to be the essential function of trans-translation. In Streptococcus pyogenes serotype M6 (strain ATCC BAA-946 / MGAS10394), this protein is SsrA-binding protein.